The primary structure comprises 215 residues: Methylthioribulose-1-phosphate dehydratase (215 aa).

Residues H103 and H105 each coordinate Zn(2+).

The protein belongs to the aldolase class II family. MtnB subfamily. Zn(2+) is required as a cofactor.

The enzyme catalyses 5-(methylsulfanyl)-D-ribulose 1-phosphate = 5-methylsulfanyl-2,3-dioxopentyl phosphate + H2O. Its pathway is amino-acid biosynthesis; L-methionine biosynthesis via salvage pathway; L-methionine from S-methyl-5-thio-alpha-D-ribose 1-phosphate: step 2/6. In terms of biological role, catalyzes the dehydration of methylthioribulose-1-phosphate (MTRu-1-P) into 2,3-diketo-5-methylthiopentyl-1-phosphate (DK-MTP-1-P). The protein is Methylthioribulose-1-phosphate dehydratase of Persephonella marina (strain DSM 14350 / EX-H1).